A 206-amino-acid polypeptide reads, in one-letter code: Small ribosomal subunit protein uS4 (206 aa).

An S4 RNA-binding domain is found at 96–156 (GRLDNVVYRM…EKAKKQSRVK (61 aa)).

Belongs to the universal ribosomal protein uS4 family. As to quaternary structure, part of the 30S ribosomal subunit. Contacts protein S5. The interaction surface between S4 and S5 is involved in control of translational fidelity.

Functionally, one of the primary rRNA binding proteins, it binds directly to 16S rRNA where it nucleates assembly of the body of the 30S subunit. Its function is as follows. With S5 and S12 plays an important role in translational accuracy. The chain is Small ribosomal subunit protein uS4 from Escherichia fergusonii (strain ATCC 35469 / DSM 13698 / CCUG 18766 / IAM 14443 / JCM 21226 / LMG 7866 / NBRC 102419 / NCTC 12128 / CDC 0568-73).